We begin with the raw amino-acid sequence, 541 residues long: Chaperonin GroEL 2 (541 aa).

ATP is bound by residues 29–32 (TLGP), 86–90 (DGTTT), Gly413, and Asp492.

Belongs to the chaperonin (HSP60) family. Forms a cylinder of 14 subunits composed of two heptameric rings stacked back-to-back. Interacts with the co-chaperonin GroES.

The protein resides in the cytoplasm. The catalysed reaction is ATP + H2O + a folded polypeptide = ADP + phosphate + an unfolded polypeptide.. Together with its co-chaperonin GroES, plays an essential role in assisting protein folding. The GroEL-GroES system forms a nano-cage that allows encapsulation of the non-native substrate proteins and provides a physical environment optimized to promote and accelerate protein folding. This chain is Chaperonin GroEL 2, found in Acidothermus cellulolyticus (strain ATCC 43068 / DSM 8971 / 11B).